Consider the following 100-residue polypeptide: Large ribosomal subunit protein uL23 (100 aa).

This sequence belongs to the universal ribosomal protein uL23 family. In terms of assembly, part of the 50S ribosomal subunit. Contacts protein L29, and trigger factor when it is bound to the ribosome.

Functionally, one of the early assembly proteins it binds 23S rRNA. One of the proteins that surrounds the polypeptide exit tunnel on the outside of the ribosome. Forms the main docking site for trigger factor binding to the ribosome. In Shewanella pealeana (strain ATCC 700345 / ANG-SQ1), this protein is Large ribosomal subunit protein uL23.